The primary structure comprises 492 residues: ATP synthase subunit beta, chloroplastic (492 aa).

ATP is bound at residue 170–177; that stretch reads GGAGVGKT.

Belongs to the ATPase alpha/beta chains family. As to quaternary structure, F-type ATPases have 2 components, CF(1) - the catalytic core - and CF(0) - the membrane proton channel. CF(1) has five subunits: alpha(3), beta(3), gamma(1), delta(1), epsilon(1). CF(0) has four main subunits: a(1), b(1), b'(1) and c(9-12).

Its subcellular location is the plastid. It localises to the chloroplast thylakoid membrane. The enzyme catalyses ATP + H2O + 4 H(+)(in) = ADP + phosphate + 5 H(+)(out). Functionally, produces ATP from ADP in the presence of a proton gradient across the membrane. The catalytic sites are hosted primarily by the beta subunits. This is ATP synthase subunit beta, chloroplastic from Pinus thunbergii (Japanese black pine).